The primary structure comprises 121 residues: Large ribosomal subunit protein bL19 (121 aa).

This sequence belongs to the bacterial ribosomal protein bL19 family.

In terms of biological role, this protein is located at the 30S-50S ribosomal subunit interface and may play a role in the structure and function of the aminoacyl-tRNA binding site. In Bifidobacterium adolescentis (strain ATCC 15703 / DSM 20083 / NCTC 11814 / E194a), this protein is Large ribosomal subunit protein bL19.